The sequence spans 96 residues: Transcriptional regulator ATRY (96 aa).

Residues 1–12 (VICTACGQQVNQ) form a GATA-type; atypical zinc finger. The ADD domain maps to 1–96 (VICTACGQQV…IAVCDSVLEN (96 aa)). The PHD-type; atypical zinc finger occupies 27 to 82 (LICKRWCAEGGNLICCDSCHNAFCKKCIWRNLGRKEISKIMNEKNEWHCYICCPEP).

Belongs to the SNF2/RAD54 helicase family. In terms of tissue distribution, expressed in developing and adult testis. Also weakly expressed in prostate and epididymis.

The protein resides in the nucleus. It catalyses the reaction ATP + H2O = ADP + phosphate + H(+). Functionally, could be a global transcriptional regulator. Modifies gene expression by affecting chromatin. The sequence is that of Transcriptional regulator ATRY (ATRY) from Notamacropus eugenii (Tammar wallaby).